A 229-amino-acid polypeptide reads, in one-letter code: Putative N-acetylmannosamine-6-phosphate 2-epimerase (229 aa).

The protein belongs to the NanE family.

The catalysed reaction is an N-acyl-D-glucosamine 6-phosphate = an N-acyl-D-mannosamine 6-phosphate. It participates in amino-sugar metabolism; N-acetylneuraminate degradation; D-fructose 6-phosphate from N-acetylneuraminate: step 3/5. In terms of biological role, converts N-acetylmannosamine-6-phosphate (ManNAc-6-P) to N-acetylglucosamine-6-phosphate (GlcNAc-6-P). In Haemophilus ducreyi (strain 35000HP / ATCC 700724), this protein is Putative N-acetylmannosamine-6-phosphate 2-epimerase.